Reading from the N-terminus, the 117-residue chain is Immunoglobulin heavy variable 4-4 (117 aa).

The N-terminal stretch at 1–19 is a signal peptide; the sequence is MKHLWFFLLLVAAPRWVLS. The framework-1 stretch occupies residues 20 to 44; sequence QVQLQESGPGLVKPSGTLSLTCAVS. Residues 20–117 enclose the Ig-like domain; sequence QVQLQESGPG…ADTAVYYCAR (98 aa). C41 and C115 are disulfide-bonded. The interval 45–53 is complementarity-determining-1; that stretch reads GGSISSSNW. The interval 54 to 70 is framework-2; sequence WSWVRQPPGKGLEWIGE. The segment at 71–77 is complementarity-determining-2; sequence IYHSGST. Residues 78-115 are framework-3; that stretch reads NYNPSLKSRVTISVDKSKNQFSLKLSSVTAADTAVYYC. The tract at residues 116-117 is complementarity-determining-3; the sequence is AR.

As to quaternary structure, immunoglobulins are composed of two identical heavy chains and two identical light chains; disulfide-linked.

The protein resides in the secreted. The protein localises to the cell membrane. In terms of biological role, v region of the variable domain of immunoglobulin heavy chains that participates in the antigen recognition. Immunoglobulins, also known as antibodies, are membrane-bound or secreted glycoproteins produced by B lymphocytes. In the recognition phase of humoral immunity, the membrane-bound immunoglobulins serve as receptors which, upon binding of a specific antigen, trigger the clonal expansion and differentiation of B lymphocytes into immunoglobulins-secreting plasma cells. Secreted immunoglobulins mediate the effector phase of humoral immunity, which results in the elimination of bound antigens. The antigen binding site is formed by the variable domain of one heavy chain, together with that of its associated light chain. Thus, each immunoglobulin has two antigen binding sites with remarkable affinity for a particular antigen. The variable domains are assembled by a process called V-(D)-J rearrangement and can then be subjected to somatic hypermutations which, after exposure to antigen and selection, allow affinity maturation for a particular antigen. This chain is Immunoglobulin heavy variable 4-4, found in Homo sapiens (Human).